Here is a 320-residue protein sequence, read N- to C-terminus: tRNA N6-adenosine threonylcarbamoyltransferase (320 aa).

His-114 and His-118 together coordinate Fe cation. Substrate is bound by residues 136 to 140 (VVSGG), Asp-169, Gly-182, Asp-186, and Asn-273. Asp-297 lines the Fe cation pocket.

It belongs to the KAE1 / TsaD family. Fe(2+) is required as a cofactor.

The protein resides in the cytoplasm. It carries out the reaction L-threonylcarbamoyladenylate + adenosine(37) in tRNA = N(6)-L-threonylcarbamoyladenosine(37) in tRNA + AMP + H(+). In terms of biological role, required for the formation of a threonylcarbamoyl group on adenosine at position 37 (t(6)A37) in tRNAs that read codons beginning with adenine. Is involved in the transfer of the threonylcarbamoyl moiety of threonylcarbamoyl-AMP (TC-AMP) to the N6 group of A37, together with TsaE and TsaB. TsaD likely plays a direct catalytic role in this reaction. The polypeptide is tRNA N6-adenosine threonylcarbamoyltransferase (Ureaplasma parvum serovar 3 (strain ATCC 27815 / 27 / NCTC 11736)).